Reading from the N-terminus, the 305-residue chain is tRNA dimethylallyltransferase (305 aa).

13–20 (GPTSSGKT) is a binding site for ATP. 15–20 (TSSGKT) is a substrate binding site. Residues 39-42 (DSKQ) are interaction with substrate tRNA.

It belongs to the IPP transferase family. Monomer. The cofactor is Mg(2+).

It catalyses the reaction adenosine(37) in tRNA + dimethylallyl diphosphate = N(6)-dimethylallyladenosine(37) in tRNA + diphosphate. Catalyzes the transfer of a dimethylallyl group onto the adenine at position 37 in tRNAs that read codons beginning with uridine, leading to the formation of N6-(dimethylallyl)adenosine (i(6)A). This is tRNA dimethylallyltransferase from Neorickettsia sennetsu (strain ATCC VR-367 / Miyayama) (Ehrlichia sennetsu).